The following is a 126-amino-acid chain: Phosphoribosyl-AMP cyclohydrolase (126 aa).

Residue aspartate 76 participates in Mg(2+) binding. Cysteine 77 provides a ligand contact to Zn(2+). Residues aspartate 78 and aspartate 80 each contribute to the Mg(2+) site. Zn(2+) is bound by residues cysteine 94 and cysteine 101.

This sequence belongs to the PRA-CH family. As to quaternary structure, homodimer. Requires Mg(2+) as cofactor. The cofactor is Zn(2+).

Its subcellular location is the cytoplasm. It carries out the reaction 1-(5-phospho-beta-D-ribosyl)-5'-AMP + H2O = 1-(5-phospho-beta-D-ribosyl)-5-[(5-phospho-beta-D-ribosylamino)methylideneamino]imidazole-4-carboxamide. It participates in amino-acid biosynthesis; L-histidine biosynthesis; L-histidine from 5-phospho-alpha-D-ribose 1-diphosphate: step 3/9. Catalyzes the hydrolysis of the adenine ring of phosphoribosyl-AMP. The protein is Phosphoribosyl-AMP cyclohydrolase of Ruthia magnifica subsp. Calyptogena magnifica.